A 353-amino-acid polypeptide reads, in one-letter code: Putative 3-oxoacyl-[acyl-carrier-protein] synthase 3 (353 aa).

Residues Cys-122, His-268, and Asn-299 contribute to the active site.

Belongs to the thiolase-like superfamily. FabH family. As to quaternary structure, homodimer.

It localises to the cytoplasm. The enzyme catalyses malonyl-[ACP] + acetyl-CoA + H(+) = 3-oxobutanoyl-[ACP] + CO2 + CoA. The protein operates within lipid metabolism; fatty acid biosynthesis. In terms of biological role, may catalyze the condensation reaction of fatty acid synthesis by the addition to an acyl acceptor of two carbons from malonyl-ACP. The protein is Putative 3-oxoacyl-[acyl-carrier-protein] synthase 3 of Campylobacter jejuni subsp. jejuni serotype O:2 (strain ATCC 700819 / NCTC 11168).